Reading from the N-terminus, the 83-residue chain is Protein YqgD (83 aa).

It belongs to the YqgD family.

This chain is Protein YqgD (yqgD), found in Escherichia coli (strain K12).